A 385-amino-acid chain; its full sequence is Protein-glutamate methylesterase/protein-glutamine glutaminase (385 aa).

Residues 20-138 (RVMIVDDSVV…EASAADIFKH (119 aa)) enclose the Response regulatory domain. Residue aspartate 71 is modified to 4-aspartylphosphate. In terms of domain architecture, CheB-type methylesterase spans 189–383 (GVTAPRVLLI…PKLVRLFSGD (195 aa)). Catalysis depends on residues serine 201, histidine 229, and aspartate 325.

This sequence belongs to the CheB family. Phosphorylated by CheA. Phosphorylation of the N-terminal regulatory domain activates the methylesterase activity.

It is found in the cytoplasm. It carries out the reaction [protein]-L-glutamate 5-O-methyl ester + H2O = L-glutamyl-[protein] + methanol + H(+). It catalyses the reaction L-glutaminyl-[protein] + H2O = L-glutamyl-[protein] + NH4(+). Its function is as follows. Involved in chemotaxis. Part of a chemotaxis signal transduction system that modulates chemotaxis in response to various stimuli. Catalyzes the demethylation of specific methylglutamate residues introduced into the chemoreceptors (methyl-accepting chemotaxis proteins or MCP) by CheR. Also mediates the irreversible deamidation of specific glutamine residues to glutamic acid. This is Protein-glutamate methylesterase/protein-glutamine glutaminase from Rhodopseudomonas palustris (strain BisB5).